A 138-amino-acid polypeptide reads, in one-letter code: Basic phospholipase A2 Tpu-G6D49 (138 aa).

An N-terminal signal peptide occupies residues 1–16; it reads MRTLWIMAVLLVGVEG. 7 disulfide bridges follow: Cys-42-Cys-131, Cys-44-Cys-60, Cys-59-Cys-111, Cys-65-Cys-138, Cys-66-Cys-104, Cys-73-Cys-97, and Cys-91-Cys-102. Ca(2+) contacts are provided by Tyr-43, Gly-45, and Gly-47. His-63 is a catalytic residue. A Ca(2+)-binding site is contributed by Asp-64. Asp-105 is a catalytic residue.

As to quaternary structure, monomer. Ca(2+) is required as a cofactor. Expressed by the venom gland.

The protein resides in the secreted. The catalysed reaction is a 1,2-diacyl-sn-glycero-3-phosphocholine + H2O = a 1-acyl-sn-glycero-3-phosphocholine + a fatty acid + H(+). Snake venom phospholipase A2 (PLA2) that impairs hemostasis. It weakly inhibits ADP-induced platelet aggregation when tested on platelet rich plasma from human and rabbit blood (15-25% of inhibition at 5-10 ug of enzyme), and dose-dependently inhibits blood coagulation, possibly by inhibiting thrombin activation. Also induces local edema a few hours after injection in the hind foot. Exhibits high hydrolytic activities toward L-dipalmitoyl phosphatidylcholine. PLA2 catalyzes the calcium-dependent hydrolysis of the 2-acyl groups in 3-sn-phosphoglycerides. The sequence is that of Basic phospholipase A2 Tpu-G6D49 from Craspedocephalus puniceus (Flat-nosed pitviper).